The primary structure comprises 503 residues: Medium/long-chain-fatty-acid--CoA ligase FadD17 (503 aa).

Belongs to the ATP-dependent AMP-binding enzyme family.

It catalyses the reaction a medium-chain fatty acid + ATP + CoA = a medium-chain fatty acyl-CoA + AMP + diphosphate. It carries out the reaction a long-chain fatty acid + ATP + CoA = a long-chain fatty acyl-CoA + AMP + diphosphate. It participates in lipid metabolism; fatty acid biosynthesis. Its function is as follows. Catalyzes the activation of medium/long-chain fatty acids as acyl-coenzyme A (acyl-CoA), which are then transferred to the multifunctional polyketide synthase (PKS) type III for further chain extension. The protein is Medium/long-chain-fatty-acid--CoA ligase FadD17 (fadD17) of Mycobacterium marinum (strain ATCC BAA-535 / M).